A 158-amino-acid polypeptide reads, in one-letter code: 6,7-dimethyl-8-ribityllumazine synthase (158 aa).

Residues Phe22, 57-59 (AVE), and 81-83 (AVI) each bind 5-amino-6-(D-ribitylamino)uracil. 86-87 (GT) is a binding site for (2S)-2-hydroxy-3-oxobutyl phosphate. His89 acts as the Proton donor in catalysis. Phe114 provides a ligand contact to 5-amino-6-(D-ribitylamino)uracil. Arg128 contacts (2S)-2-hydroxy-3-oxobutyl phosphate.

Belongs to the DMRL synthase family. Forms an icosahedral capsid composed of 60 subunits, arranged as a dodecamer of pentamers.

It catalyses the reaction (2S)-2-hydroxy-3-oxobutyl phosphate + 5-amino-6-(D-ribitylamino)uracil = 6,7-dimethyl-8-(1-D-ribityl)lumazine + phosphate + 2 H2O + H(+). Its pathway is cofactor biosynthesis; riboflavin biosynthesis; riboflavin from 2-hydroxy-3-oxobutyl phosphate and 5-amino-6-(D-ribitylamino)uracil: step 1/2. In terms of biological role, catalyzes the formation of 6,7-dimethyl-8-ribityllumazine by condensation of 5-amino-6-(D-ribitylamino)uracil with 3,4-dihydroxy-2-butanone 4-phosphate. This is the penultimate step in the biosynthesis of riboflavin. This Shewanella frigidimarina (strain NCIMB 400) protein is 6,7-dimethyl-8-ribityllumazine synthase.